Consider the following 227-residue polypeptide: PKHD-type hydroxylase GDI1238/Gdia_1949 (227 aa).

The region spanning 78 to 178 (RVVPPLFNRY…RLASFFWTQS (101 aa)) is the Fe2OG dioxygenase domain. Residues H96, D98, and H159 each coordinate Fe cation. 2-oxoglutarate is bound at residue R169.

Requires Fe(2+) as cofactor. The cofactor is L-ascorbate.

This Gluconacetobacter diazotrophicus (strain ATCC 49037 / DSM 5601 / CCUG 37298 / CIP 103539 / LMG 7603 / PAl5) protein is PKHD-type hydroxylase GDI1238/Gdia_1949.